Here is a 504-residue protein sequence, read N- to C-terminus: Histidine ammonia-lyase (504 aa).

Residues 142–144 (ASG) constitute a cross-link (5-imidazolinone (Ala-Gly)). Ser-143 carries the post-translational modification 2,3-didehydroalanine (Ser).

It belongs to the PAL/histidase family. Contains an active site 4-methylidene-imidazol-5-one (MIO), which is formed autocatalytically by cyclization and dehydration of residues Ala-Ser-Gly.

It is found in the cytoplasm. The enzyme catalyses L-histidine = trans-urocanate + NH4(+). It functions in the pathway amino-acid degradation; L-histidine degradation into L-glutamate; N-formimidoyl-L-glutamate from L-histidine: step 1/3. This is Histidine ammonia-lyase from Staphylococcus aureus (strain bovine RF122 / ET3-1).